A 120-amino-acid chain; its full sequence is Secreted effector PIT2 (120 aa).

The first 25 residues, 1–25, serve as a signal peptide directing secretion; the sequence is MLFRSAFVLLIVAFASACLVQHVQA. The interval 46–59 is PID14 protease inhibitor domain; the sequence is KLNRRWWFGFTGSL.

Interacts with host cysteine proteases CP1A, CP1B, XCP2 and CP2. In terms of processing, cleaved by host target papain-like cysteine proteases (PLCPs) to release the embedded inhibitor peptide PID14.

Its subcellular location is the secreted. In terms of biological role, secreted effector required for virulence. Functions as an inhibitor of a set of apoplastic maize papain-like cysteine proteases (PLCPs) including CP1A, CP1B, XCP2 and CP2, whose activity is directly linked with salicylic-acid-associated plant defenses. Acts as a substrate mimicking molecule for apoplastic PLCPs and its processing releases the embedded inhibitor peptide PID14, which in turn blocks PLCPs to modulate host immunity. This chain is Secreted effector PIT2, found in Mycosarcoma maydis (Corn smut fungus).